We begin with the raw amino-acid sequence, 259 residues long: MSIGIFDSGVGGLTVFREIDREFPFADIYYLGDTARVPYGNKSKETIIRYSLECANYLYSFGIDALIVACNTASSYAIEALRESFDIPVIGVIKPGVELAVKTTKNGRIGVIGTQATIKSGSYRTEIEKKGDFTVYQKPCPLFVPLVEEGLIDHKITELTVKEYLDDIVSKGIDTLILGCTHYPLLKDVIKKIYPHLNIIDSSKATALYLKKKNLDLNGTGERKIFITDESPSFEKLKDLVVGSDIHLEKLELSKICTL.

Substrate-binding positions include 7 to 8 (DS) and 39 to 40 (YG). Cys-70 serves as the catalytic Proton donor/acceptor. Residue 71 to 72 (NT) participates in substrate binding. Cys-180 acts as the Proton donor/acceptor in catalysis. 181–182 (TH) is a binding site for substrate.

This sequence belongs to the aspartate/glutamate racemases family.

It carries out the reaction L-glutamate = D-glutamate. It functions in the pathway cell wall biogenesis; peptidoglycan biosynthesis. In terms of biological role, provides the (R)-glutamate required for cell wall biosynthesis. The protein is Glutamate racemase of Persephonella marina (strain DSM 14350 / EX-H1).